We begin with the raw amino-acid sequence, 769 residues long: Serine protease HtrA-like (769 aa).

Residues 1–20 (MDIGKKHVIPKSQYRRKRRE) are compositionally biased toward basic residues. The disordered stretch occupies residues 1 to 390 (MDIGKKHVIP…ATSKLNKGRA (390 aa)). 2 stretches are compositionally biased toward basic and acidic residues: residues 21-64 (FFHN…ERFK) and 71-108 (LEQRNRDVNENKAEESKSNQDSKSAYNRDHYLTDDVSK). Residues 126 to 137 (YEQNSEATLSTK) are compositionally biased toward polar residues. Residues 138–186 (STDKVESTEMRKLSSDKNKVGHEEQHVLSKPSEHDKETRIDSESSRTDS) are compositionally biased toward basic and acidic residues. The span at 247 to 262 (QQSQNEQTKTYTYGDS) shows a compositional bias: polar residues. Basic and acidic residues-rich tracts occupy residues 264 to 296 (QNDKSNHENDLSHHIPSISDDKDNVMRENHIVD) and 310 to 330 (KTDDDRKLDEKIHVEDKHKQN). Residues 331 to 347 (ADSSETVGYQSQSTASH) show a composition bias toward polar residues. The span at 348 to 364 (RSTEKRNISINDHDKLN) shows a compositional bias: basic and acidic residues. A compositionally biased stretch (polar residues) spans 365 to 390 (GQKTNTKTSANNNQKKATSKLNKGRA). A helical membrane pass occupies residues 410–430 (LVILMGIIILIVILNAIFNNV). Active-site charge relay system residues include His504, Asp534, and Ser619. The PDZ domain maps to 680–733 (IASLNSFERQAVKLPGKVKNGVVVDQVDNNGLADQSGLKKGDVITELDGKLLED).

It belongs to the peptidase S1C family.

Its subcellular location is the cell membrane. The polypeptide is Serine protease HtrA-like (Staphylococcus aureus (strain USA300)).